We begin with the raw amino-acid sequence, 163 residues long: Nucleotide-binding protein GK0742 (163 aa).

It belongs to the YajQ family.

Functionally, nucleotide-binding protein. The protein is Nucleotide-binding protein GK0742 of Geobacillus kaustophilus (strain HTA426).